Consider the following 224-residue polypeptide: Polyadenylate-binding protein 2 (224 aa).

Residues 1 to 36 (MADEDITLNEDQLLESLEETNGEQETEIATEVEEEG) are compositionally biased toward acidic residues. Positions 1 to 40 (MADEDITLNEDQLLESLEETNGEQETEIATEVEEEGSMQI) are disordered. Residues 9 to 74 (NEDQLLESLE…QSEVDKQMAG (66 aa)) adopt a coiled-coil conformation. In terms of domain architecture, RRM spans 96-173 (RSVYVGNVDY…RQIKVMSKRT (78 aa)).

As to quaternary structure, interacts with ZC3H3. Expressed ubiquitously in all transcriptionally active cells.

It is found in the nucleus. The protein localises to the cytoplasm. Functionally, involved in the 3'-end formation of mRNA precursors (pre-mRNA) by the addition of a poly(A) tail of 200-250 nt to the upstream cleavage product. Stimulates poly(A) polymerase (PAPOLA) conferring processivity on the poly(A) tail elongation reaction and also controls the poly(A) tail length. Increases the affinity of poly(A) polymerase for RNA. Binds to poly(A) and to poly(G) with high affinity. May protect the poly(A) tail from degradation. Plays a role in the positive regulation of alpha-1,3 fucosylation, possibly by cooperating with swm which regulates nuclear export of fucosyltransferase FucTA. Involved in germline stem cell transit amplification, differentiation and mitosis-to-meiosis transition. This is Polyadenylate-binding protein 2 from Drosophila melanogaster (Fruit fly).